The following is a 247-amino-acid chain: ATP synthase subunit a, chloroplastic (247 aa).

5 consecutive transmembrane segments (helical) span residues 38–58 (QVLI…TIAV), 95–115 (VPFI…GALF), 134–154 (INTT…AGLT), 199–219 (LVVV…VMFL), and 220–240 (GLFT…AYIG).

Belongs to the ATPase A chain family. F-type ATPases have 2 components, CF(1) - the catalytic core - and CF(0) - the membrane proton channel. CF(1) has five subunits: alpha(3), beta(3), gamma(1), delta(1), epsilon(1). CF(0) has four main subunits: a, b, b' and c.

It localises to the plastid. The protein resides in the chloroplast thylakoid membrane. Functionally, key component of the proton channel; it plays a direct role in the translocation of protons across the membrane. The protein is ATP synthase subunit a, chloroplastic of Piper cenocladum (Ant piper).